Reading from the N-terminus, the 349-residue chain is Transcription elongation factor A protein 3 (349 aa).

The TFIIS N-terminal domain maps to 5-82; it reads EELLRIAKKL…RNWKQLLDSP (78 aa). The disordered stretch occupies residues 80 to 170; it reads DSPATPKGEK…RTPSSPSSPT (91 aa). Positions 101–110 are enriched in basic and acidic residues; that stretch reads KGLDCSDWKP. Phosphoserine is present on serine 115. A compositionally biased stretch (basic and acidic residues) spans 121 to 133; the sequence is RVEEPKDRRDSVD. 2 stretches are compositionally biased toward low complexity: residues 134–144 and 160–170; these read SKSSATSSPKR and PRTPSSPSSPT. A Phosphoserine modification is found at serine 141. A TFIIS central domain is found at 188–304; it reads VRDKCVEMLS…EHQMAKTGGT (117 aa). The TFIIS-type zinc-finger motif lies at 307-347; it reads DLFQCSKCKKKNCTYNQVQTRSADEPMTTFVLCNECGNRWK. Zn(2+) is bound by residues cysteine 311, cysteine 314, cysteine 339, and cysteine 342.

This sequence belongs to the TFS-II family.

Its subcellular location is the nucleus. Functionally, necessary for efficient RNA polymerase II transcription elongation past template-encoded arresting sites. The arresting sites in DNA have the property of trapping a certain fraction of elongating RNA polymerases that pass through, resulting in locked ternary complexes. Cleavage of the nascent transcript by S-II allows the resumption of elongation from the new 3'-terminus. The polypeptide is Transcription elongation factor A protein 3 (TCEA3) (Bos taurus (Bovine)).